Consider the following 152-residue polypeptide: Small ribosomal subunit protein uS13 (152 aa).

This sequence belongs to the universal ribosomal protein uS13 family. In terms of assembly, component of the small ribosomal subunit.

It localises to the cytoplasm. In terms of biological role, component of the small ribosomal subunit. The ribosome is a large ribonucleoprotein complex responsible for the synthesis of proteins in the cell. The polypeptide is Small ribosomal subunit protein uS13 (rps18) (Ictalurus punctatus (Channel catfish)).